The chain runs to 205 residues: Glycerol-3-phosphate acyltransferase (205 aa).

Transmembrane regions (helical) follow at residues 6–26, 55–75, 89–109, 120–140, and 162–182; these read STVLFAIGAYLIGSISFAVVV, KAAILTLLGDGAKGFVAVWLV, VALVAIAVFLGHLWPIFFRFV, ILLALNGWLGLATLITWLVIA, and ALMFGPDAILLAVVAMSVLLI.

The protein belongs to the PlsY family. As to quaternary structure, probably interacts with PlsX.

The protein localises to the cell inner membrane. It catalyses the reaction an acyl phosphate + sn-glycerol 3-phosphate = a 1-acyl-sn-glycero-3-phosphate + phosphate. The protein operates within lipid metabolism; phospholipid metabolism. In terms of biological role, catalyzes the transfer of an acyl group from acyl-phosphate (acyl-PO(4)) to glycerol-3-phosphate (G3P) to form lysophosphatidic acid (LPA). This enzyme utilizes acyl-phosphate as fatty acyl donor, but not acyl-CoA or acyl-ACP. This Herminiimonas arsenicoxydans protein is Glycerol-3-phosphate acyltransferase.